The sequence spans 90 residues: UPF0729 protein Bm1_03610 (90 aa).

The protein belongs to the UPF0729 family.

The polypeptide is UPF0729 protein Bm1_03610 (Brugia malayi (Filarial nematode worm)).